A 326-amino-acid chain; its full sequence is Microtubule-associated protein RP/EB family member 2 (326 aa).

Position 9 is a phosphoserine (Ser9). Residues 56–158 (TMSRHDIIAW…FIQWFKKFYD (103 aa)) enclose the Calponin-homology (CH) domain. Tyr166 is subject to Phosphotyrosine. Disordered regions lie at residues 170 to 239 (EARQ…DKDL) and 298 to 326 (ASDE…QEEY). A DCTN1-binding region spans residues 186–326 (QIFNLPKKSH…EQQPQQQEEY (141 aa)). The span at 199–233 (SPTAGAAKSSPASKPGSTPSRPSSAKRASSSGSAS) shows a compositional bias: low complexity. Residues Ser218 and Ser235 each carry the phosphoserine modification. The region spanning 235-305 (SDKDLETQVI…LYASDEHEGH (71 aa)) is the EB1 C-terminal domain. The interval 258 to 301 (EGVEKERDFYFGKLREIELLCQEHGQENDDLVQRLMDVLYASDE) is APC-binding. Positions 299-316 (SDEHEGHPEEPEAEEQVH) are enriched in basic and acidic residues. Positions 317-326 (EQQPQQQEEY) are enriched in low complexity.

The protein belongs to the MAPRE family. In terms of assembly, interacts with DCTN1. Interacts with APC (via C-terminal). Interacts with monomeric and polymerized tubulin. Interacts with SLAIN1. Interacts (via the N-terminal region) with BAG1. Interacts with ASB14. Interacts with HAX1; this interaction is essential for epidermal cell migration. Post-translationally, phosphorylated at Ser-235 by CK2 leading to enhanced cell adhesion. Phosphorylated by CDK1 and AURKB during mitosis reduces the binding affinity of MAPRE2 for microtubules. Ubiquitinated in an ASB14-dependent manner; leading to proteasomal degradation.

It is found in the cytoplasm. It localises to the cytoskeleton. Functionally, adapter protein that is involved in microtubule polymerization, and spindle function by stabilizing microtubules and anchoring them at centrosomes. Therefore, ensures mitotic progression and genome stability. Acts as a central regulator of microtubule reorganization in apico-basal epithelial differentiation. Plays a role during oocyte meiosis by regulating microtubule dynamics. Participates in neurite growth by interacting with plexin B3/PLXNB3 and microtubule reorganization during apico-basal epithelial differentiation. Also plays an essential role for cell migration and focal adhesion dynamics. Mechanistically, recruits HAX1 to microtubules in order to regulate focal adhesion dynamics. This chain is Microtubule-associated protein RP/EB family member 2 (MAPRE2), found in Bos taurus (Bovine).